Reading from the N-terminus, the 212-residue chain is Thiamine-phosphate synthase (212 aa).

Residues Q33 to K37 and N65 each bind 4-amino-2-methyl-5-(diphosphooxymethyl)pyrimidine. Mg(2+)-binding residues include D66 and D85. Residue T104 participates in 4-amino-2-methyl-5-(diphosphooxymethyl)pyrimidine binding. T130–T132 contacts 2-[(2R,5Z)-2-carboxy-4-methylthiazol-5(2H)-ylidene]ethyl phosphate. K133 serves as a coordination point for 4-amino-2-methyl-5-(diphosphooxymethyl)pyrimidine. G166 provides a ligand contact to 2-[(2R,5Z)-2-carboxy-4-methylthiazol-5(2H)-ylidene]ethyl phosphate.

The protein belongs to the thiamine-phosphate synthase family. The cofactor is Mg(2+).

It carries out the reaction 2-[(2R,5Z)-2-carboxy-4-methylthiazol-5(2H)-ylidene]ethyl phosphate + 4-amino-2-methyl-5-(diphosphooxymethyl)pyrimidine + 2 H(+) = thiamine phosphate + CO2 + diphosphate. It catalyses the reaction 2-(2-carboxy-4-methylthiazol-5-yl)ethyl phosphate + 4-amino-2-methyl-5-(diphosphooxymethyl)pyrimidine + 2 H(+) = thiamine phosphate + CO2 + diphosphate. The enzyme catalyses 4-methyl-5-(2-phosphooxyethyl)-thiazole + 4-amino-2-methyl-5-(diphosphooxymethyl)pyrimidine + H(+) = thiamine phosphate + diphosphate. It participates in cofactor biosynthesis; thiamine diphosphate biosynthesis; thiamine phosphate from 4-amino-2-methyl-5-diphosphomethylpyrimidine and 4-methyl-5-(2-phosphoethyl)-thiazole: step 1/1. Functionally, condenses 4-methyl-5-(beta-hydroxyethyl)thiazole monophosphate (THZ-P) and 2-methyl-4-amino-5-hydroxymethyl pyrimidine pyrophosphate (HMP-PP) to form thiamine monophosphate (TMP). The sequence is that of Thiamine-phosphate synthase from Flavobacterium johnsoniae (strain ATCC 17061 / DSM 2064 / JCM 8514 / BCRC 14874 / CCUG 350202 / NBRC 14942 / NCIMB 11054 / UW101) (Cytophaga johnsonae).